Reading from the N-terminus, the 260-residue chain is Hydroxypyruvate/pyruvate aldolase Bphyt_0320 (260 aa).

Catalysis depends on H48, which acts as the Proton acceptor. E157 and D183 together coordinate a divalent metal cation.

This sequence belongs to the HpcH/HpaI aldolase family. Requires Mn(2+) as cofactor. The cofactor is Mg(2+). Co(2+) serves as cofactor.

It catalyses the reaction D-glyceraldehyde + 3-hydroxypyruvate = 2-dehydro-D-gluconate. It carries out the reaction D-glyceraldehyde + pyruvate = 2-dehydro-3-deoxy-L-galactonate. The catalysed reaction is 2-dehydro-3-deoxy-D-gluconate = D-glyceraldehyde + pyruvate. Its function is as follows. Aldolase which can catalyze in vitro the aldolisation reaction between hydroxypyruvate (HPA) or pyruvate (PA) and D-glyceraldehyde (D-GA). The condensation of hydroxypyruvate and D-glyceraldehyde produces 2-dehydro-D-gluconate. The condensation of pyruvate and D-glyceraldehyde produces 2-dehydro-3-deoxy-L-galactonate as the major product and 2-dehydro-3-deoxy-D-gluconate. Also catalyzes the retro-aldol type decarboxylation of oxaloacetate, a general property of known pyruvate aldolases. This is Hydroxypyruvate/pyruvate aldolase Bphyt_0320 from Paraburkholderia phytofirmans (strain DSM 17436 / LMG 22146 / PsJN) (Burkholderia phytofirmans).